A 94-amino-acid polypeptide reads, in one-letter code: Exodeoxyribonuclease 7 small subunit (94 aa).

The protein belongs to the XseB family. Heterooligomer composed of large and small subunits.

The protein localises to the cytoplasm. It catalyses the reaction Exonucleolytic cleavage in either 5'- to 3'- or 3'- to 5'-direction to yield nucleoside 5'-phosphates.. Bidirectionally degrades single-stranded DNA into large acid-insoluble oligonucleotides, which are then degraded further into small acid-soluble oligonucleotides. This chain is Exodeoxyribonuclease 7 small subunit, found in Ralstonia nicotianae (strain ATCC BAA-1114 / GMI1000) (Ralstonia solanacearum).